The primary structure comprises 87 residues: Alpha-elapitoxin-Ls2a (87 aa).

Positions 1-21 (MKTLLLTLVVVTIVCLDLGYT) are cleaved as a signal peptide. Intrachain disulfides connect cysteine 24–cysteine 41, cysteine 34–cysteine 62, cysteine 47–cysteine 51, cysteine 66–cysteine 77, and cysteine 78–cysteine 83.

The protein belongs to the three-finger toxin family. Long-chain subfamily. Type II alpha-neurotoxin sub-subfamily. In terms of tissue distribution, expressed by the venom gland.

Its subcellular location is the secreted. Functionally, binds with high affinity to muscular (tested on Torpedo marmorata, Kd=1.6 nM) and neuronal (chimeric alpha-7/CHRNA7, Kd=3 nM) nicotinic acetylcholine receptor (nAChR) and inhibits acetylcholine from binding to the receptor, thereby impairing neuromuscular and neuronal transmission. Also shows a very weak inhibition on GABA(A) receptors. The toxin (10 uM) inhibits 83% of current in channels composed of alpha-1-beta-3-gamma-2 (GABRA1-GABRB3-GABRG2) subunits, 39% of current in channels composed of alpha-2-beta-2-gamma-2 (GABRA2-GABRB2-GABRG2) subunits, and 33% of current in channels composed of alpha-5-beta-2-gamma-2 (GABRA5-GABRB2-GABRG2) subunits. This Laticauda semifasciata (Black-banded sea krait) protein is Alpha-elapitoxin-Ls2a.